The chain runs to 321 residues: Mas-related G-protein coupled receptor member D (321 aa).

The Extracellular portion of the chain corresponds to 1 to 33 (MNQTLNSSGTVESALNYSRGSTVHTAYLVLSSL). Asn-2, Asn-6, and Asn-16 each carry an N-linked (GlcNAc...) asparagine glycan. The chain crosses the membrane as a helical span at residues 34-54 (AMFTCLCGMAGNSMVIWLLGF). The Cytoplasmic segment spans residues 55–59 (RMHRN). A helical membrane pass occupies residues 60–80 (PFCIYILNLAAADLLFLFSMA). Over 81–112 (STLSLETQPLVNTTDKVHELMKRLMYFAYTVG) the chain is Extracellular. Asn-92 carries an N-linked (GlcNAc...) asparagine glycan. A helical membrane pass occupies residues 113 to 133 (LSLLTAISTQRCLSVLFPIWF). Residues 134–142 (KCHRPRHLS) lie on the Cytoplasmic side of the membrane. The helical transmembrane segment at 143–163 (AWVCGLLWTLCLLMNGLTSSF) threads the bilayer. At 164–184 (CSKFLKFNEDRCFRVDMVQAA) the chain is on the extracellular side. Residues 185 to 205 (LIMGVLTPVMTLSSLTLFVWV) form a helical membrane-spanning segment. Topologically, residues 206–218 (RRSSQQWRRQPTR) are cytoplasmic. Residues 219-239 (LFVVVLASVLVFLICSLPLSI) form a helical membrane-spanning segment. The Extracellular portion of the chain corresponds to 240 to 257 (YWFVLYWLSLPPEMQVLC). Residues 258-280 (FSLSRLSSSVSSSANPVIYFLVG) traverse the membrane as a helical segment. The Cytoplasmic portion of the chain corresponds to 281-321 (SRRSHRLPTRSLGTVLQQALREEPELEGGETPTVGTNEMGA). Residues 302-321 (EEPELEGGETPTVGTNEMGA) form a disordered region.

It belongs to the G-protein coupled receptor 1 family. Mas subfamily.

The protein localises to the cell membrane. In terms of biological role, may regulate nociceptor function and/or development, including the sensation or modulation of pain. Functions as a specific membrane receptor for beta-alanine. Beta-alanine at micromolar doses specifically evoked Ca(2+) influx in cells expressing the receptor. Beta-alanine decreases forskolin-stimulated cAMP production in cells expressing the receptor, suggesting that the receptor couples with G-protein G(q) and G(i). This is Mas-related G-protein coupled receptor member D (MRGPRD) from Homo sapiens (Human).